A 252-amino-acid chain; its full sequence is Probable transcriptional regulatory protein Bcav_1989 (252 aa).

It belongs to the TACO1 family.

The protein localises to the cytoplasm. In Beutenbergia cavernae (strain ATCC BAA-8 / DSM 12333 / CCUG 43141 / JCM 11478 / NBRC 16432 / NCIMB 13614 / HKI 0122), this protein is Probable transcriptional regulatory protein Bcav_1989.